The following is a 118-amino-acid chain: Large ribosomal subunit protein uL18 (118 aa).

It belongs to the universal ribosomal protein uL18 family. Part of the 50S ribosomal subunit; part of the 5S rRNA/L5/L18/L25 subcomplex. Contacts the 5S and 23S rRNAs.

This is one of the proteins that bind and probably mediate the attachment of the 5S RNA into the large ribosomal subunit, where it forms part of the central protuberance. This chain is Large ribosomal subunit protein uL18, found in Myxococcus xanthus (strain DK1622).